The sequence spans 158 residues: NAD(P)H-quinone oxidoreductase subunit N (158 aa).

This sequence belongs to the complex I NdhN subunit family. NDH-1 can be composed of about 15 different subunits; different subcomplexes with different compositions have been identified which probably have different functions.

It is found in the cellular thylakoid membrane. The enzyme catalyses a plastoquinone + NADH + (n+1) H(+)(in) = a plastoquinol + NAD(+) + n H(+)(out). It catalyses the reaction a plastoquinone + NADPH + (n+1) H(+)(in) = a plastoquinol + NADP(+) + n H(+)(out). In terms of biological role, NDH-1 shuttles electrons from an unknown electron donor, via FMN and iron-sulfur (Fe-S) centers, to quinones in the respiratory and/or the photosynthetic chain. The immediate electron acceptor for the enzyme in this species is believed to be plastoquinone. Couples the redox reaction to proton translocation, and thus conserves the redox energy in a proton gradient. Cyanobacterial NDH-1 also plays a role in inorganic carbon-concentration. This Rippkaea orientalis (strain PCC 8801 / RF-1) (Cyanothece sp. (strain PCC 8801)) protein is NAD(P)H-quinone oxidoreductase subunit N.